A 202-amino-acid chain; its full sequence is MDLTIVGSDNTLPVSDVVFGREFSEALVHQVVVAYRNTARSGTKAQKSRSQVSGTTKKSKKQKGGGARHGALTAPIFVGGGVAFAAKPRSFSQKVNRKQYRSAICSIFSELNRQGRLKVVDAFDVEVSKTRVFAEKIKSLEVVGSSLLIVSDEISECLSLSSRNLPCVDVRSVQALDPVALVGSDVVVLTVGAVKKIEEWLV.

Over residues 42–52 (GTKAQKSRSQV) the composition is skewed to polar residues. Residues 42-70 (GTKAQKSRSQVSGTTKKSKKQKGGGARHG) are disordered.

It belongs to the universal ribosomal protein uL4 family. As to quaternary structure, part of the 50S ribosomal subunit.

In terms of biological role, one of the primary rRNA binding proteins, this protein initially binds near the 5'-end of the 23S rRNA. It is important during the early stages of 50S assembly. It makes multiple contacts with different domains of the 23S rRNA in the assembled 50S subunit and ribosome. Forms part of the polypeptide exit tunnel. This Xylella fastidiosa (strain Temecula1 / ATCC 700964) protein is Large ribosomal subunit protein uL4.